The chain runs to 336 residues: Ferrochelatase (336 aa).

Fe cation is bound by residues histidine 206 and glutamate 287.

Belongs to the ferrochelatase family.

It localises to the cytoplasm. It carries out the reaction heme b + 2 H(+) = protoporphyrin IX + Fe(2+). The protein operates within porphyrin-containing compound metabolism; protoheme biosynthesis; protoheme from protoporphyrin-IX: step 1/1. Functionally, catalyzes the ferrous insertion into protoporphyrin IX. The protein is Ferrochelatase of Neisseria gonorrhoeae (strain ATCC 700825 / FA 1090).